We begin with the raw amino-acid sequence, 117 residues long: Prefoldin subunit beta (117 aa).

The protein belongs to the prefoldin subunit beta family. In terms of assembly, heterohexamer of two alpha and four beta subunits.

It is found in the cytoplasm. Its function is as follows. Molecular chaperone capable of stabilizing a range of proteins. Seems to fulfill an ATP-independent, HSP70-like function in archaeal de novo protein folding. This Thermococcus kodakarensis (strain ATCC BAA-918 / JCM 12380 / KOD1) (Pyrococcus kodakaraensis (strain KOD1)) protein is Prefoldin subunit beta.